The sequence spans 148 residues: Ribosome maturation factor RimP (148 aa).

This sequence belongs to the RimP family.

Its subcellular location is the cytoplasm. Its function is as follows. Required for maturation of 30S ribosomal subunits. This is Ribosome maturation factor RimP from Nautilia profundicola (strain ATCC BAA-1463 / DSM 18972 / AmH).